The primary structure comprises 379 residues: Occlusion-derived virus envelope protein E56 (379 aa).

Residues 156 to 176 (AGVGVLLAGGAYLTFSAATLV) traverse the membrane as a helical segment. Asn-184 carries N-linked (GlcNAc...) asparagine; by host glycosylation. Residues 320-340 (LMPLIWLIGAVLFLGLIIYLI) form a helical membrane-spanning segment.

This sequence belongs to the baculoviridae E56 family.

It is found in the virion membrane. In terms of biological role, structural protein that is specific for occlusion-derived virus (ODV) envelopes but not of budded virus (BV). The polypeptide is Occlusion-derived virus envelope protein E56 (ODVP6E) (Choristoneura fumiferana nuclear polyhedrosis virus (CfMNPV)).